Here is a 1877-residue protein sequence, read N- to C-terminus: Neuron navigator 1 (1877 aa).

Met1 is modified (N-acetylmethionine). The interval 1-59 (MLGSSVKSVQPEVELSSGGGDEGADEPRGAGRKAAAADGRGMLPKRAKAPGGGGGMAKA) is disordered. The segment covering 32-41 (RKAAAADGRG) has biased composition (low complexity). Residues Ser90, Ser142, and Ser152 each carry the phosphoserine modification. The interval 114 to 225 (DMAKAPKGLG…PVPSAKGQEE (112 aa)) is disordered. Thr159 carries the phosphothreonine modification. Residues Ser194 and Ser199 each carry the phosphoserine modification. Positions 205–214 (SSKAKAQKSS) are enriched in low complexity. A coiled-coil region spans residues 255-280 (ESQRKRTVQNVLDLRQNLEETMSSLR). The segment at 294–336 (YDSDDANPRSVSSLSNRSSPLSWRYGQSSPRLQAGDAPSVGGS) is disordered. Residues Ser296, Ser308, Ser312, Ser362, and Ser391 each carry the phosphoserine modification. The span at 301–315 (PRSVSSLSNRSSPLS) shows a compositional bias: low complexity. 2 disordered regions span residues 386–839 (KSGY…PLPS) and 892–989 (MSLP…PMSL). Composition is skewed to low complexity over residues 411-425 (DESSSISSGLSDASD) and 433-448 (NASSSLNSLPSTPTAS). Residues Ser452, Ser474, Ser476, and Ser490 each carry the phosphoserine modification. The segment covering 476–486 (SEEKAPKKLEY) has biased composition (basic and acidic residues). The segment covering 503 to 519 (ERPESCDDSSKGGELKK) has biased composition (basic and acidic residues). Ser528 bears the Phosphoserine mark. Thr534 carries the phosphothreonine modification. Ser541 is modified (phosphoserine). Thr544 bears the Phosphothreonine mark. Residues 555-566 (GKPEGKATDKGK) are compositionally biased toward basic and acidic residues. A Phosphothreonine modification is found at Thr572. The span at 581 to 591 (AGRDRLSDAKK) shows a compositional bias: basic and acidic residues. Composition is skewed to polar residues over residues 615–635 (GTATVMQTGGSATLSKIQKSS) and 645–655 (RKTSLDVSNSA). Phosphoserine is present on Ser648. Residue Arg688 is modified to Omega-N-methylarginine. 2 stretches are compositionally biased toward polar residues: residues 698–710 (IDPSLLSTKQGGL) and 724–733 (GRTTPAPVNQ). Residues 731-756 (VNQTDREKEKAKAKAVALDSDNISLK) adopt a coiled-coil conformation. Residues Ser750, Ser754, Ser760, Ser797, and Ser808 each carry the phosphoserine modification. Over residues 751 to 773 (DNISLKSIGSPESTPKNQASHPT) the composition is skewed to polar residues. Residues 805-818 (NSNSLDLPSSSDTT) are compositionally biased toward low complexity. Over residues 902–913 (TPVPTPPAPPAA) the composition is skewed to pro residues. Ser1000 is subject to Phosphoserine. Thr1006 is modified (phosphothreonine). The stretch at 1072 to 1163 (SSAEERMQSE…SEAQAVIQGA (92 aa)) forms a coiled coil. Thr1170 carries the phosphothreonine modification. Disordered stretches follow at residues 1172-1204 (KELRIKRQNSSDSISSLNSITSHSSIGSSKDAD), 1244-1306 (ATPD…EKKE), 1359-1383 (LKVAPGPSSGSTPGQVPGSSALSSP), and 1810-1843 (KLYHLPPPTVGPHSIASPPEDRTVKDSTPSSLDS). Ser1181 carries the post-translational modification Phosphoserine. Residues 1181–1200 (SSDSISSLNSITSHSSIGSS) show a composition bias toward low complexity. Residues 1246–1264 (PDSSAPSSPKLQHGSTETA) are compositionally biased toward polar residues. Phosphoserine is present on Ser1265. Residues 1265 to 1275 (SPSIKSSTSSS) show a composition bias toward low complexity. The stretch at 1303–1362 (EKKEVSELRSELWEKEMKLTDIRLEALNSAHQLDQLRETMHNMQLEVDLLKAENDRLKVA) forms a coiled coil. Residues 1366–1383 (SSGSTPGQVPGSSALSSP) show a composition bias toward polar residues. Ser1382 carries the post-translational modification Phosphoserine.

It belongs to the Nav/unc-53 family. As to quaternary structure, interacts with tubulin. In terms of tissue distribution, broadly expressed at low levels. Expressed at high levels in heart, skeletal muscle and placenta.

The protein resides in the cytoplasm. Its subcellular location is the cytoskeleton. Its function is as follows. May be involved in neuronal migration. In Homo sapiens (Human), this protein is Neuron navigator 1 (NAV1).